We begin with the raw amino-acid sequence, 658 residues long: Protein cueball (658 aa).

The Extracellular segment spans residues 1 to 543; that stretch reads MSGVTARMEN…SYCKNSFNRT (543 aa). 2 N-linked (GlcNAc...) asparagine glycosylation sites follow: asparagine 25 and asparagine 122. LDL-receptor class B repeat units lie at residues 100–142, 152–195, and 196–241; these read RKLY…NHDL, RHLY…DHYS, and NRIY…NSRY. 3 EGF-like domains span residues 352–384, 387–422, and 458–495; these read EIPI…FEGE, DRSK…KRCE, and EEYT…KRCE. 8 disulfides stabilise this stretch: cysteine 356–cysteine 365, cysteine 360–cysteine 375, cysteine 391–cysteine 401, cysteine 395–cysteine 410, cysteine 412–cysteine 421, cysteine 462–cysteine 472, cysteine 466–cysteine 483, and cysteine 485–cysteine 494. N-linked (GlcNAc...) asparagine glycosylation is found at asparagine 400 and asparagine 415. The N-linked (GlcNAc...) asparagine glycan is linked to asparagine 476. The N-linked (GlcNAc...) asparagine glycan is linked to asparagine 541. The helical transmembrane segment at 544 to 564 threads the bilayer; sequence VVYASLAFAASLFILMVILLI. Residues 565–658 are Cytoplasmic-facing; the sequence is VRRFYEEGRP…SCAGGDKNLP (94 aa).

The protein belongs to the cueball family.

Its subcellular location is the cell membrane. Functionally, has a role in spermatogenesis and oogenesis. In Culex quinquefasciatus (Southern house mosquito), this protein is Protein cueball.